The sequence spans 471 residues: FAD-dependent monooxygenase andE (471 aa).

Positions 35, 49, and 108 each coordinate FAD. Residue Tyr216 is part of the active site. 2 residues coordinate FAD: Asp308 and Ala321. The next 2 helical transmembrane spans lie at 403–423 and 443–463; these read LANISSMLIANGEIIQYLPFP and TPFALFSAILLVQHVVPLLGL.

This sequence belongs to the paxM FAD-dependent monooxygenase family. It depends on FAD as a cofactor.

Its subcellular location is the membrane. The protein operates within secondary metabolite biosynthesis; terpenoid biosynthesis. Functionally, FAD-dependent monooxygenase; part of the gene cluster that mediates the biosynthesis of anditomin, a fungal meroterpenoid. The first step of the pathway is the synthesis of 3,5-dimethylorsellinic acid (DMOA) by the polyketide synthase andM. DMOA is then converted to the phthalide compound 5,7-dihydroxy-4,6-dimethylphthalide (DHDMP) by the cytochrome P450 monooxygenase andK, which is further prenylated by the prenyltransferase andD to yield farnesyl-DHDMP. Further epoxidation by the FAD-dependent monooxygenase andE leads to epoxyfarnesyl-DHDMP. The next step involves the terpene cyclase andB that converts epoxyfarnesyl-DHDMP into preandiloid A through opening of the epoxide ring followed by the cyclization of the farnesyl moiety. Preandiloid A is in turn oxidized at the C-3 hydroxyl group to yield preandiloid B by the dehydrogenase andC. The dioxygenase andA is solely responsible for the dehydrogenation of preandiloid B leading to the enone preandiloid C, as well as for the intriguing structural rearrangement to generate the bicyclo[2.2.2]octane core, transforming preandiloid C into andiconin. FAD-binding monooxygenase andJ then produces andilesin D which is reduced by dehydrogenase andI to yield andilesin A. Action of acetyltransferase andG followed by a spontaneous acetate elimination leads then to andilesin B, which is in turn substrate of the short chain dehydrogenase andH to yield andilesin C. Finally, the dioxygenase andF catalyzes the transformation of andilesin C to anditomin. The protein is FAD-dependent monooxygenase andE of Emericella variicolor (Aspergillus stellatus).